Here is a 263-residue protein sequence, read N- to C-terminus: 3-methyl-2-oxobutanoate hydroxymethyltransferase (263 aa).

Mg(2+) is bound by residues aspartate 43 and aspartate 82. Residues 43 to 44 (DS), aspartate 82, and lysine 111 contribute to the 3-methyl-2-oxobutanoate site. Glutamate 113 contacts Mg(2+). Residue glutamate 179 is the Proton acceptor of the active site.

The protein belongs to the PanB family. Homodecamer; pentamer of dimers. Requires Mg(2+) as cofactor.

It is found in the cytoplasm. The catalysed reaction is 3-methyl-2-oxobutanoate + (6R)-5,10-methylene-5,6,7,8-tetrahydrofolate + H2O = 2-dehydropantoate + (6S)-5,6,7,8-tetrahydrofolate. Its pathway is cofactor biosynthesis; (R)-pantothenate biosynthesis; (R)-pantoate from 3-methyl-2-oxobutanoate: step 1/2. Its function is as follows. Catalyzes the reversible reaction in which hydroxymethyl group from 5,10-methylenetetrahydrofolate is transferred onto alpha-ketoisovalerate to form ketopantoate. This Neisseria meningitidis serogroup B (strain ATCC BAA-335 / MC58) protein is 3-methyl-2-oxobutanoate hydroxymethyltransferase.